The sequence spans 146 residues: Large ribosomal subunit protein uL15 (146 aa).

A compositionally biased stretch (basic and acidic residues) spans 1–13 (MKLHELHSAEGSR). The interval 1–55 (MKLHELHSAEGSRRNRKRVGRGTSSGYGKTSGRGQKGQLARQGGHTRLGFEGGQM) is disordered. Residues 23-35 (TSSGYGKTSGRGQ) are compositionally biased toward gly residues.

This sequence belongs to the universal ribosomal protein uL15 family. Part of the 50S ribosomal subunit.

Functionally, binds to the 23S rRNA. This is Large ribosomal subunit protein uL15 from Lactobacillus acidophilus (strain ATCC 700396 / NCK56 / N2 / NCFM).